The following is a 692-amino-acid chain: Elongation factor G (692 aa).

One can recognise a tr-type G domain in the interval 8-283 (EDYRNFGIMA…AVVDYLPSPL (276 aa)). GTP contacts are provided by residues 17 to 24 (AHIDAGKT), 81 to 85 (DTPGH), and 135 to 138 (NKMD).

Belongs to the TRAFAC class translation factor GTPase superfamily. Classic translation factor GTPase family. EF-G/EF-2 subfamily.

The protein resides in the cytoplasm. Catalyzes the GTP-dependent ribosomal translocation step during translation elongation. During this step, the ribosome changes from the pre-translocational (PRE) to the post-translocational (POST) state as the newly formed A-site-bound peptidyl-tRNA and P-site-bound deacylated tRNA move to the P and E sites, respectively. Catalyzes the coordinated movement of the two tRNA molecules, the mRNA and conformational changes in the ribosome. The protein is Elongation factor G of Caulobacter sp. (strain K31).